Here is a 343-residue protein sequence, read N- to C-terminus: Thiamine-phosphate synthase (343 aa).

A unknown region spans residues 1–123; sequence MQQASPTAIA…GACCKQLRYR (123 aa). The segment at 124–343 is thiamine-phosphate synthase; it reads VYALESGLLG…LLTQLSRINP (220 aa). 4-amino-2-methyl-5-(diphosphooxymethyl)pyrimidine is bound by residues 171–175 and Asn203; that span reads QYRDK. 2 residues coordinate Mg(2+): Asp204 and Asp223. A 4-amino-2-methyl-5-(diphosphooxymethyl)pyrimidine-binding site is contributed by Ser242. 268-270 lines the 2-[(2R,5Z)-2-carboxy-4-methylthiazol-5(2H)-ylidene]ethyl phosphate pocket; the sequence is TPT. Lys271 contacts 4-amino-2-methyl-5-(diphosphooxymethyl)pyrimidine. Residue Gly298 coordinates 2-[(2R,5Z)-2-carboxy-4-methylthiazol-5(2H)-ylidene]ethyl phosphate.

It belongs to the thiamine-phosphate synthase family. Mg(2+) is required as a cofactor.

The enzyme catalyses 2-[(2R,5Z)-2-carboxy-4-methylthiazol-5(2H)-ylidene]ethyl phosphate + 4-amino-2-methyl-5-(diphosphooxymethyl)pyrimidine + 2 H(+) = thiamine phosphate + CO2 + diphosphate. It carries out the reaction 2-(2-carboxy-4-methylthiazol-5-yl)ethyl phosphate + 4-amino-2-methyl-5-(diphosphooxymethyl)pyrimidine + 2 H(+) = thiamine phosphate + CO2 + diphosphate. It catalyses the reaction 4-methyl-5-(2-phosphooxyethyl)-thiazole + 4-amino-2-methyl-5-(diphosphooxymethyl)pyrimidine + H(+) = thiamine phosphate + diphosphate. The protein operates within cofactor biosynthesis; thiamine diphosphate biosynthesis; thiamine phosphate from 4-amino-2-methyl-5-diphosphomethylpyrimidine and 4-methyl-5-(2-phosphoethyl)-thiazole: step 1/1. Its function is as follows. Condenses 4-methyl-5-(beta-hydroxyethyl)thiazole monophosphate (THZ-P) and 2-methyl-4-amino-5-hydroxymethyl pyrimidine pyrophosphate (HMP-PP) to form thiamine monophosphate (TMP). The polypeptide is Thiamine-phosphate synthase (Synechocystis sp. (strain ATCC 27184 / PCC 6803 / Kazusa)).